An 876-amino-acid chain; its full sequence is DNA mismatch repair protein MutS (876 aa).

Residue 626-633 (GPNMGGKS) coordinates ATP.

It belongs to the DNA mismatch repair MutS family.

Functionally, this protein is involved in the repair of mismatches in DNA. It is possible that it carries out the mismatch recognition step. This protein has a weak ATPase activity. This chain is DNA mismatch repair protein MutS, found in Bordetella bronchiseptica (strain ATCC BAA-588 / NCTC 13252 / RB50) (Alcaligenes bronchisepticus).